The primary structure comprises 264 residues: Thymidylate synthase (264 aa).

Arg21 lines the dUMP pocket. His51 is a binding site for (6R)-5,10-methylene-5,6,7,8-tetrahydrofolate. A dUMP-binding site is contributed by 126–127; it reads RR. The active-site Nucleophile is the Cys146. DUMP-binding positions include 166–169, Asn177, and 207–209; these read RSAD and HLY. Residue Asp169 coordinates (6R)-5,10-methylene-5,6,7,8-tetrahydrofolate. Ala263 contacts (6R)-5,10-methylene-5,6,7,8-tetrahydrofolate.

It belongs to the thymidylate synthase family. Bacterial-type ThyA subfamily. Homodimer.

It is found in the cytoplasm. It carries out the reaction dUMP + (6R)-5,10-methylene-5,6,7,8-tetrahydrofolate = 7,8-dihydrofolate + dTMP. Its pathway is pyrimidine metabolism; dTTP biosynthesis. Catalyzes the reductive methylation of 2'-deoxyuridine-5'-monophosphate (dUMP) to 2'-deoxythymidine-5'-monophosphate (dTMP) while utilizing 5,10-methylenetetrahydrofolate (mTHF) as the methyl donor and reductant in the reaction, yielding dihydrofolate (DHF) as a by-product. This enzymatic reaction provides an intracellular de novo source of dTMP, an essential precursor for DNA biosynthesis. The sequence is that of Thymidylate synthase from Ralstonia nicotianae (strain ATCC BAA-1114 / GMI1000) (Ralstonia solanacearum).